Consider the following 163-residue polypeptide: Phosphopantetheine adenylyltransferase (163 aa).

Thr11 contacts substrate. ATP-binding positions include 11-12 (TF) and His19. Substrate contacts are provided by Lys43, Leu75, and Arg89. Residues 90–92 (GLR), Glu100, and 125–131 (YSFISST) contribute to the ATP site.

Belongs to the bacterial CoaD family. Homohexamer. It depends on Mg(2+) as a cofactor.

Its subcellular location is the cytoplasm. The enzyme catalyses (R)-4'-phosphopantetheine + ATP + H(+) = 3'-dephospho-CoA + diphosphate. It participates in cofactor biosynthesis; coenzyme A biosynthesis; CoA from (R)-pantothenate: step 4/5. Functionally, reversibly transfers an adenylyl group from ATP to 4'-phosphopantetheine, yielding dephospho-CoA (dPCoA) and pyrophosphate. The sequence is that of Phosphopantetheine adenylyltransferase from Acinetobacter baylyi (strain ATCC 33305 / BD413 / ADP1).